Consider the following 243-residue polypeptide: Secreted RxLR effector protein 28 (243 aa).

Positions 1–26 (MHVSRIIAHIALATAITATTVSPTDA) are cleaved as a signal peptide. A RxLR motif is present at residues 49-52 (RGLR). The disordered stretch occupies residues 187-243 (NVDEDKGQNFGHSVSGPPTTTLTGPHTKSGIPPFENLVAPAKGSMPNTRRNGYQFFE). Positions 199–216 (SVSGPPTTTLTGPHTKSG) are enriched in low complexity.

This sequence belongs to the RxLR effector family.

The protein resides in the secreted. It is found in the host cytoplasm. It localises to the host nucleus. In terms of biological role, effector that significantly enhances susceptibilities of grapevine and tobacco to pathogens. Acts as a broad suppressor of cell death to interrupt plant immunity. Completely inhibits cell death induced by cell death-inducing proteins, including the PAMP elicitor INF1 from P.infestans. Reduces the transcriptional levels of the defense-related genes and impairs the H(2)O(2) accumulation in N.benthamiana. The sequence is that of Secreted RxLR effector protein 28 from Plasmopara viticola (Downy mildew of grapevine).